A 176-amino-acid chain; its full sequence is 3-hydroxyacyl-[acyl-carrier-protein] dehydratase FabZ (176 aa).

The active site involves histidine 54.

It belongs to the thioester dehydratase family. FabZ subfamily.

Its subcellular location is the cytoplasm. It catalyses the reaction a (3R)-hydroxyacyl-[ACP] = a (2E)-enoyl-[ACP] + H2O. Functionally, involved in unsaturated fatty acids biosynthesis. Catalyzes the dehydration of short chain beta-hydroxyacyl-ACPs and long chain saturated and unsaturated beta-hydroxyacyl-ACPs. In Yersinia pseudotuberculosis serotype O:1b (strain IP 31758), this protein is 3-hydroxyacyl-[acyl-carrier-protein] dehydratase FabZ.